The sequence spans 229 residues: Cytidylate kinase (229 aa).

7-15 is a binding site for ATP; the sequence is GPAGAGKSS.

The protein belongs to the cytidylate kinase family. Type 1 subfamily.

Its subcellular location is the cytoplasm. The catalysed reaction is CMP + ATP = CDP + ADP. It carries out the reaction dCMP + ATP = dCDP + ADP. The chain is Cytidylate kinase from Rhodopirellula baltica (strain DSM 10527 / NCIMB 13988 / SH1).